Reading from the N-terminus, the 279-residue chain is MTFRFLCWLTGLLLCTAAYAIPQRVISLAPHATEMAYAAGMGEQLIAVSAWSDYPPEAKKLEQVASWQGINLERILALKPDLILAWREGNPQRPLEQLANFSIPIVYLDAKTLDDIPASLRQLATYSRHPEQAERAATDFQQQIGELQHADEKHKAAHTAPLRVFIQFGTQPLFTSSKATLQSQIVSLCGAENIFSDSTVPWPQVSREQVLRRQPQAIIIGGASDKIANTQAFWQPQLTVPVITVNEDWFSRSGPRLLLAAQQICSQLAELKLAPSSAK.

A signal peptide spans 1–20; that stretch reads MTFRFLCWLTGLLLCTAAYA. The 253-residue stretch at 24–276 folds into the Fe/B12 periplasmic-binding domain; it reads RVISLAPHAT…QLAELKLAPS (253 aa). Cysteine 189 and cysteine 265 form a disulfide bridge.

Belongs to the BtuF family. As to quaternary structure, the complex is composed of two ATP-binding proteins (BtuD), two transmembrane proteins (BtuC) and a solute-binding protein (BtuF).

The protein localises to the periplasm. Its function is as follows. Part of the ABC transporter complex BtuCDF involved in vitamin B12 import. Binds vitamin B12 and delivers it to the periplasmic surface of BtuC. The protein is Vitamin B12-binding protein of Pectobacterium atrosepticum (strain SCRI 1043 / ATCC BAA-672) (Erwinia carotovora subsp. atroseptica).